Here is a 480-residue protein sequence, read N- to C-terminus: MVKEPNGVTRTMRRIRRIHFVGIGGAGMCGIAEVLLNLGYEVSGSDLKASAVTERLEKFGAQIFIGHQAENADGADVLVVSSAINRANPEVASALERRIPVVPRAEMLAELMRYRHGIAVAGTHGKTTTTSLIASVFAAGGLDPTFVIGGRLNAAGTNAQLGASRYLVAEADESDASFLHLQPMVAVVTNIDADHMATYGGDFNKLKKTFVEFLHNLPFYGLAVMCVDDPVVREILPQIARPTVTYGLSEDADVRAINIRQEGMRTWFTVLRPEREPLDVSVNMPGLHNVLNSLATIVIATDEGISDEAIVQGLSGFQGVGRRFQVYGELQVEGGSVMLVDDYGHHPREVAAVIKAIRGGWPERRLVMVYQPHRYTRTRDLYEDFVQVLGEANVLLLMEVYPAGEEPIPGADSRQLCHSIRQRGQLDPIYFERDADLAPLVKPLLRAGDILLCQGAGDVGGLAPQLIRNPLFAGKGGKGA.

ATP is bound at residue G122–T128.

This sequence belongs to the MurCDEF family.

It is found in the cytoplasm. The catalysed reaction is UDP-N-acetyl-alpha-D-muramate + L-alanine + ATP = UDP-N-acetyl-alpha-D-muramoyl-L-alanine + ADP + phosphate + H(+). It participates in cell wall biogenesis; peptidoglycan biosynthesis. Functionally, cell wall formation. This chain is UDP-N-acetylmuramate--L-alanine ligase, found in Pseudomonas paraeruginosa (strain DSM 24068 / PA7) (Pseudomonas aeruginosa (strain PA7)).